A 398-amino-acid chain; its full sequence is tRNA-specific 2-thiouridylase MnmA (398 aa).

ATP-binding positions include 18–25 (AMSGGVDS) and Leu-44. Cys-112 serves as the catalytic Nucleophile. Cys-112 and Cys-213 are disulfide-bonded. Gly-136 serves as a coordination point for ATP. An interaction with tRNA region spans residues 163-165 (RDQ). Cys-213 (cysteine persulfide intermediate) is an active-site residue.

This sequence belongs to the MnmA/TRMU family.

The protein resides in the cytoplasm. It carries out the reaction S-sulfanyl-L-cysteinyl-[protein] + uridine(34) in tRNA + AH2 + ATP = 2-thiouridine(34) in tRNA + L-cysteinyl-[protein] + A + AMP + diphosphate + H(+). In terms of biological role, catalyzes the 2-thiolation of uridine at the wobble position (U34) of tRNA, leading to the formation of s(2)U34. The polypeptide is tRNA-specific 2-thiouridylase MnmA (Sinorhizobium medicae (strain WSM419) (Ensifer medicae)).